Here is a 481-residue protein sequence, read N- to C-terminus: Acetyltransferase peniE (481 aa).

Catalysis depends on proton acceptor residues H164 and D411.

The protein belongs to the plant acyltransferase family. In terms of assembly, monomer.

In terms of biological role, acetyltransferase; part of the gene cluster that mediates the biosynthesis of penifulvin A, a potent insecticidal sesquiterpene that features a [5.5.5.6]dioxafenestrane ring. The first step of the pathway is performed by the sesquiterpene cyclase peniA that generates the angular triquinane scaffold silphinene via cyclization of the linear farnesyl pyrophosphate (FPP). The cytochrome P450 monooxygenase peniB and the flavin-dependent monooxygenase peniC then catalyze a series of oxidation reactions to transform silphinene into penifulvin A. The dioxygenases peniD and peniF, as well as the acetyltransferase peniE, do not seem to be involved in the biosynthesis of penifulvin A. The sequence is that of Acetyltransferase peniE from Penicillium patulum (Penicillium griseofulvum).